The chain runs to 64 residues: Metallothionein-like protein 1 (64 aa).

Belongs to the metallothionein superfamily. Type 15 family.

Its function is as follows. Metallothioneins have a high content of cysteine residues that bind various heavy metals. The sequence is that of Metallothionein-like protein 1 (MT1) from Prunus avium (Cherry).